Consider the following 564-residue polypeptide: uncharacterized protein (564 aa).

Residues methionine 1–serine 17 show a composition bias toward polar residues. Residues methionine 1–serine 564 form a disordered region. Low complexity-rich tracts occupy residues serine 79–proline 97 and serine 114–threonine 134. The span at arginine 153–serine 168 shows a compositional bias: polar residues. Residues threonine 170–threonine 179 are compositionally biased toward low complexity. Over residues glycine 250–alanine 271 the composition is skewed to pro residues. Residues serine 272–serine 299 are compositionally biased toward low complexity. Positions proline 318–arginine 351 are enriched in polar residues. The span at arginine 378–serine 416 shows a compositional bias: low complexity. Polar residues predominate over residues serine 467–serine 564.

This is an uncharacterized protein from Homo sapiens (Human).